Here is a 178-residue protein sequence, read N- to C-terminus: Large ribosomal subunit protein uL6c (178 aa).

This sequence belongs to the universal ribosomal protein uL6 family. Part of the 50S ribosomal subunit.

The protein localises to the plastid. Its subcellular location is the chloroplast. Functionally, binds 23S rRNA. The sequence is that of Large ribosomal subunit protein uL6c (rpl6) from Phaeodactylum tricornutum (strain CCAP 1055/1).